The chain runs to 321 residues: Torsin-2A (321 aa).

Positions 1–26 are cleaved as a signal peptide; it reads MAAATRSCRPWGSLLGLIWLVSAAAA. 93–100 contacts ATP; that stretch reads GWTGTGKS. A glycan (N-linked (GlcNAc...) asparagine) is linked at N149.

Belongs to the ClpA/ClpB family. Torsin subfamily. As to quaternary structure, homohexamer. Interacts with TOR1AIP1.

The protein localises to the endoplasmic reticulum lumen. In Bos taurus (Bovine), this protein is Torsin-2A (TOR2A).